The sequence spans 202 residues: uncharacterized protein (202 aa).

Residues 13–73 form the HTH tetR-type domain; that stretch reads ELAADRILDA…AYVHRETRRL (61 aa). Residues 36-55 constitute a DNA-binding region (H-T-H motif); the sequence is GMNEIAKAAGCSRATLYRYF.

This is an uncharacterized protein from Mycobacterium tuberculosis (strain CDC 1551 / Oshkosh).